The sequence spans 97 residues: Cobalt transport protein CbiN (97 aa).

A run of 2 helical transmembrane segments spans residues 6–26 and 68–88; these read VLMI…YSGL and SLLF…FFGY.

The protein belongs to the CbiN family. As to quaternary structure, forms an energy-coupling factor (ECF) transporter complex composed of an ATP-binding protein (A component, CbiO), a transmembrane protein (T component, CbiQ) and 2 possible substrate-capture proteins (S components, CbiM and CbiN) of unknown stoichimetry.

It localises to the cell membrane. It participates in cofactor biosynthesis; adenosylcobalamin biosynthesis. Its function is as follows. Part of the energy-coupling factor (ECF) transporter complex CbiMNOQ involved in cobalt import. The sequence is that of Cobalt transport protein CbiN from Methanococcus maripaludis (strain C7 / ATCC BAA-1331).